A 191-amino-acid polypeptide reads, in one-letter code: Protein adenylyltransferase NmFic (191 aa).

In terms of domain architecture, Fido spans 37–162 (GTTAGLQQIH…NDLELRFLLK (126 aa)). ATP is bound by residues lysine 67, 104-107 (NIAH), 112-118 (GNGRSTR), and 140-143 (KTLY). Positions 182–187 (SYYYEG) match the Inhibitory (S/T)XXXE(G/N) motif motif. Residue tyrosine 183 is modified to O-AMP-tyrosine; in vitro. Glutamate 186 contributes to the ATP binding site.

As to quaternary structure, homodimer. Auto-AMPylation at Tyr-183 in vitro.

It catalyses the reaction L-tyrosyl-[protein] + ATP = O-(5'-adenylyl)-L-tyrosyl-[protein] + diphosphate. It carries out the reaction L-threonyl-[protein] + ATP = 3-O-(5'-adenylyl)-L-threonyl-[protein] + diphosphate. With respect to regulation, adenylyltransferase activity is inhibited by the inhibitory helix present at the C-terminus: Glu-186 binds ATP and competes with ATP-binding at Arg-118, thereby preventing adenylyltransferase activity. Activation dissociates ATP-binding from Glu-186, allowing ordered binding of the entire ATP moiety with the alpha-phosphate in an orientation that is productive for accepting an incoming target hydroxyl side chain. In terms of biological role, adenylyltransferase that mediates the addition of adenosine 5'-monophosphate (AMP) to specific residues of target proteins. The sequence is that of Protein adenylyltransferase NmFic from Neisseria meningitidis serogroup B (strain ATCC BAA-335 / MC58).